Here is a 408-residue protein sequence, read N- to C-terminus: Na(+)/H(+) antiporter NhaA 2 (408 aa).

11 helical membrane passes run 36 to 56 (GILLLICVLVSLIVANTGLGV), 79 to 99 (ILLWINDGLMAVFFLLVGLEI), 115 to 135 (ALPVLAAVGGVIIPALIYFLF), 145 to 165 (GWGIPMATDIAFALGILSLLG), 174 to 194 (IFLAALAIVDDLIAILVIAVF), 197 to 217 (SELHFLYLGYAGGIFVLLMVF), 225 to 245 (LFFYLLPGAVMWYFIHHSGIH), 281 to 301 (FIIMPVFALANTNIAFESEML), 310 to 330 (LGIILGLVLGKPIGIFVMSWL), 348 to 368 (VLGLGLLGGIGFTMSIFIALL), and 381 to 401 (FAILTASVLAGAAGFILLSSY).

Belongs to the NhaA Na(+)/H(+) (TC 2.A.33) antiporter family.

It localises to the cell inner membrane. It catalyses the reaction Na(+)(in) + 2 H(+)(out) = Na(+)(out) + 2 H(+)(in). Na(+)/H(+) antiporter that extrudes sodium in exchange for external protons. This Flavobacterium johnsoniae (strain ATCC 17061 / DSM 2064 / JCM 8514 / BCRC 14874 / CCUG 350202 / NBRC 14942 / NCIMB 11054 / UW101) (Cytophaga johnsonae) protein is Na(+)/H(+) antiporter NhaA 2.